Consider the following 284-residue polypeptide: 2-dehydro-3-deoxyphosphooctonate aldolase (284 aa).

The protein belongs to the KdsA family.

It is found in the cytoplasm. The catalysed reaction is D-arabinose 5-phosphate + phosphoenolpyruvate + H2O = 3-deoxy-alpha-D-manno-2-octulosonate-8-phosphate + phosphate. The protein operates within carbohydrate biosynthesis; 3-deoxy-D-manno-octulosonate biosynthesis; 3-deoxy-D-manno-octulosonate from D-ribulose 5-phosphate: step 2/3. Its pathway is bacterial outer membrane biogenesis; lipopolysaccharide biosynthesis. This is 2-dehydro-3-deoxyphosphooctonate aldolase from Glaesserella parasuis serovar 5 (strain SH0165) (Haemophilus parasuis).